A 175-amino-acid polypeptide reads, in one-letter code: Protein-export protein SecB (175 aa).

Residues Gln-153–Asp-163 show a composition bias toward polar residues. The tract at residues Gln-153 to Gln-175 is disordered.

Belongs to the SecB family. In terms of assembly, homotetramer, a dimer of dimers. One homotetramer interacts with 1 SecA dimer.

It localises to the cytoplasm. One of the proteins required for the normal export of preproteins out of the cell cytoplasm. It is a molecular chaperone that binds to a subset of precursor proteins, maintaining them in a translocation-competent state. It also specifically binds to its receptor SecA. In Bordetella bronchiseptica (strain ATCC BAA-588 / NCTC 13252 / RB50) (Alcaligenes bronchisepticus), this protein is Protein-export protein SecB.